Reading from the N-terminus, the 68-residue chain is Urocalcin (68 aa).

The signal sequence occupies residues 1–27 (MKASTLVVIFIVIFITISSFSIHDVQA). A propeptide spanning residues 28-35 (SGVEKREQ) is cleaved from the precursor. Disulfide bonds link cysteine 38–cysteine 52, cysteine 45–cysteine 56, and cysteine 51–cysteine 67. Positions 57 to 59 (KRR) are essential for stimulation of [3H]ryanodine binding to RYR1.

It belongs to the scorpion calcin family. In terms of tissue distribution, expressed by the venom gland.

The protein localises to the secreted. Its function is as follows. This toxin only weakly stabilizes ryanodine receptor 1 (RyR1) opening in a long-lasting subconductance state (55% of the full conductance state obtained only at high concentrations (1 uM)). In addition, it has been shown to dose-dependently stimulate ryanodine binding to RyR1 with the lowest activity of all calcins (EC(50)=376 nM). It also augments the bell-shaped calcium-[3H]ryanodine binding curve that is maximal at about 10 uM calcium concentration. It binds a different site as ryanodine. It acts synergistically with caffeine. In contrast to other calcins, it does not trigger calcium release from sarcoplasmic vesicles even at high concentration (1 uM). In vivo, intracerebroventricular injection into mice induces neurotoxic symptoms, followed by death. In Urodacus yaschenkoi (Inland robust scorpion), this protein is Urocalcin.